Reading from the N-terminus, the 348-residue chain is D-alanine--D-alanine ligase (348 aa).

Positions 132 to 334 (KRVLESAGIP…YSDLIEELVS (203 aa)) constitute an ATP-grasp domain. 162-217 (LETLSFPIFVKPANMGSSVGISKAESIEGLREAIALALKYDSRILIEQGVVAREIE) lines the ATP pocket. Residues D288, E301, and N303 each coordinate Mg(2+).

The protein belongs to the D-alanine--D-alanine ligase family. Requires Mg(2+) as cofactor. The cofactor is Mn(2+).

The protein localises to the cytoplasm. It carries out the reaction 2 D-alanine + ATP = D-alanyl-D-alanine + ADP + phosphate + H(+). It participates in cell wall biogenesis; peptidoglycan biosynthesis. Its function is as follows. Cell wall formation. This is D-alanine--D-alanine ligase from Streptococcus uberis (strain ATCC BAA-854 / 0140J).